The sequence spans 865 residues: Fanconi-associated nuclease 1 homolog (865 aa).

A UBZ4-type zinc finger spans residues 35–62 (GKICPLCETKFSLASYKSHMNTCNVADD). Positions 38, 41, 53, and 57 each coordinate Zn(2+). Disordered stretches follow at residues 90–140 (DASF…SLDV) and 162–187 (RRSS…PVKK). Basic and acidic residues-rich tracts occupy residues 93 to 112 (FSDK…REVP) and 174 to 187 (DQAD…PVKK). Residues E682, D810, E825, and V826 each contribute to the Mn(2+) site. The 114-residue stretch at 744-857 (QELIEENIRK…GIRAEVCHVA (114 aa)) folds into the VRR-NUC domain.

This sequence belongs to the FAN1 family. The cofactor is Mn(2+). Mg(2+) is required as a cofactor.

The protein resides in the nucleus. It carries out the reaction Hydrolytically removes 5'-nucleotides successively from the 3'-hydroxy termini of 3'-hydroxy-terminated oligonucleotides.. Nuclease required for the repair of DNA interstrand cross-links (ICL). Acts as a 5'-3' exonuclease that anchors at a cut end of DNA and cleaves DNA successively at every third nucleotide, allowing to excise an ICL from one strand through flanking incisions. The chain is Fanconi-associated nuclease 1 homolog (fan-1) from Caenorhabditis elegans.